The chain runs to 367 residues: Mitochondrial GTPase 1 (367 aa).

Residues 42–228 (LKTFEKLLPQ…LIDTPGIGVP (187 aa)) enclose the CP-type G domain. GTP-binding positions include 89-92 (TRKD), 160-165 (NVGKST), and glycine 224.

Belongs to the TRAFAC class YlqF/YawG GTPase family. MTG1 subfamily.

The protein resides in the mitochondrion inner membrane. Functionally, mitochondrial GTPase involved in assembly of the large ribosomal subunit. Plays a role in expression of the mitochondrial translational machinery. This chain is Mitochondrial GTPase 1 (MTG1), found in Saccharomyces cerevisiae (strain ATCC 204508 / S288c) (Baker's yeast).